Here is a 105-residue protein sequence, read N- to C-terminus: Cell division topological specificity factor (105 aa).

Belongs to the MinE family.

In terms of biological role, prevents the cell division inhibition by proteins MinC and MinD at internal division sites while permitting inhibition at polar sites. This ensures cell division at the proper site by restricting the formation of a division septum at the midpoint of the long axis of the cell. The chain is Cell division topological specificity factor from Prochlorococcus marinus (strain MIT 9515).